A 91-amino-acid chain; its full sequence is Acylphosphatase (91 aa).

The 88-residue stretch at 3-90 folds into the Acylphosphatase-like domain; sequence QYRIIVDGRV…EGHHRFSIVY (88 aa). Catalysis depends on residues R18 and N36.

This sequence belongs to the acylphosphatase family.

It catalyses the reaction an acyl phosphate + H2O = a carboxylate + phosphate + H(+). This Bacillus subtilis (strain 168) protein is Acylphosphatase (acyP).